The sequence spans 549 residues: Cytoplasmic trehalase (549 aa).

Substrate contacts are provided by residues arginine 168, 175–176 (WD), asparagine 212, 221–223 (RSQ), 292–294 (RDE), and glycine 324. Active-site proton donor/acceptor residues include aspartate 326 and glutamate 509. Glutamate 525 contacts substrate.

It belongs to the glycosyl hydrolase 37 family. In terms of assembly, monomer.

Its subcellular location is the cytoplasm. The enzyme catalyses alpha,alpha-trehalose + H2O = alpha-D-glucose + beta-D-glucose. The protein operates within glycan degradation; trehalose degradation; D-glucose from alpha,alpha-trehalose: step 1/1. In terms of biological role, hydrolyzes trehalose to glucose. Could be involved, in cells returning to low osmolarity conditions, in the utilization of the accumulated cytoplasmic trehalose, which was synthesized in response to high osmolarity. The polypeptide is Cytoplasmic trehalase (Salmonella choleraesuis (strain SC-B67)).